Consider the following 498-residue polypeptide: ATP synthase subunit beta, chloroplastic (498 aa).

172-179 (GGAGVGKT) serves as a coordination point for ATP.

Belongs to the ATPase alpha/beta chains family. In terms of assembly, F-type ATPases have 2 components, CF(1) - the catalytic core - and CF(0) - the membrane proton channel. CF(1) has five subunits: alpha(3), beta(3), gamma(1), delta(1), epsilon(1). CF(0) has four main subunits: a(1), b(1), b'(1) and c(9-12).

The protein localises to the plastid. It is found in the chloroplast thylakoid membrane. It carries out the reaction ATP + H2O + 4 H(+)(in) = ADP + phosphate + 5 H(+)(out). Its function is as follows. Produces ATP from ADP in the presence of a proton gradient across the membrane. The catalytic sites are hosted primarily by the beta subunits. The chain is ATP synthase subunit beta, chloroplastic from Saccharum hybrid (Sugarcane).